Reading from the N-terminus, the 856-residue chain is Serine/threonine-protein kinase unc-51 (856 aa).

The Protein kinase domain occupies 9-275 (YSKRDLLGHG…FEDFFNHPFL (267 aa)). ATP-binding positions include 15–23 (LGHGAFAIV) and Lys-39. The active-site Proton acceptor is Asp-134. The interval 304–327 (PQSSLPVPKRAGSTKLDSPTPVRR) is disordered. The short motif at 358–361 (FTFL) is the LIR element. 3 disordered regions span residues 362–391 (PPRQESSPVKQVQVHTNVSPSLTTCKPVPV), 405–471 (LAAA…ERMT), and 520–582 (PTTT…PTEP). Residues 365–385 (QESSPVKQVQVHTNVSPSLTT) show a composition bias toward polar residues. Residues 411–436 (TAVPSSSSPTGSAVSAQHQHQHQQQQ) are compositionally biased toward low complexity. Polar residues-rich tracts occupy residues 527–536 (IPKSATTANI) and 566–578 (KYQQTDVNNSPTA). A required for interaction with unc-14 and vab-8 region spans residues 750-856 (YHQCLVRSQE…RQGFVAAVNT (107 aa)).

The protein belongs to the protein kinase superfamily. Ser/Thr protein kinase family. APG1/unc-51/ULK1 subfamily. Interacts with unc-14 and vab-8. Interacts (via C-terminus) with atg-13. Interacts (via the LIR motif) with lgg-1; the interaction is direct. It depends on Mg(2+) as a cofactor.

The catalysed reaction is L-seryl-[protein] + ATP = O-phospho-L-seryl-[protein] + ADP + H(+). It catalyses the reaction L-threonyl-[protein] + ATP = O-phospho-L-threonyl-[protein] + ADP + H(+). Its function is as follows. Protein kinase important for axonal elongation and axonal guidance. Functions in the CAN axons to direct both anterior and posterior migrations. Phosphorylates both unc-14 and vab-8. Component of the unc-51/atg-13 complex that is probably recruited by lgg-1 to preautophagosomes and is required for autophagosome formation. Interaction with autophagy related proteins such as atg-13 links it to the autophagy machinery to in turn promote P-granule degradation in somatic cells. Plays a role in mitophagy during limited food availability. Regulates cell size. Plays a role in male tail ray pattern formation. May be required for normal dauer morphogenesis. The protein is Serine/threonine-protein kinase unc-51 of Caenorhabditis elegans.